The following is a 497-amino-acid chain: Probable zinc metalloprotease TRV_03476 (497 aa).

Positions Met-1 to Ala-24 are cleaved as a signal peptide. 2 N-linked (GlcNAc...) asparagine glycosylation sites follow: Asn-100 and Asn-121. Residues His-171, Asp-191, and Glu-227 each coordinate Zn(2+). N-linked (GlcNAc...) asparagine glycosylation occurs at Asn-242. Position 254 (Asp-254) interacts with Zn(2+). The 87-residue stretch at Met-411 to Pro-497 folds into the Fibronectin type-III domain. N-linked (GlcNAc...) asparagine glycosylation is present at Asn-424.

Belongs to the peptidase M28 family. M28B subfamily. The cofactor is Zn(2+).

The protein resides in the secreted. The chain is Probable zinc metalloprotease TRV_03476 from Trichophyton verrucosum (strain HKI 0517).